The following is a 243-amino-acid chain: Probable transcriptional regulatory protein Athe_0816 (243 aa).

It belongs to the TACO1 family.

The protein resides in the cytoplasm. The chain is Probable transcriptional regulatory protein Athe_0816 from Caldicellulosiruptor bescii (strain ATCC BAA-1888 / DSM 6725 / KCTC 15123 / Z-1320) (Anaerocellum thermophilum).